The chain runs to 557 residues: Urocanate hydratase (557 aa).

NAD(+) is bound by residues 53–54 (GG), Gln-131, 177–179 (GMG), Asp-197, Arg-202, 243–244 (NA), 264–268 (QTSAH), 274–275 (YL), and Tyr-323. Cys-411 is a catalytic residue. Gly-493 is a binding site for NAD(+).

It belongs to the urocanase family. Requires NAD(+) as cofactor.

It is found in the cytoplasm. The catalysed reaction is 4-imidazolone-5-propanoate = trans-urocanate + H2O. The protein operates within amino-acid degradation; L-histidine degradation into L-glutamate; N-formimidoyl-L-glutamate from L-histidine: step 2/3. Catalyzes the conversion of urocanate to 4-imidazolone-5-propionate. This Hahella chejuensis (strain KCTC 2396) protein is Urocanate hydratase.